The primary structure comprises 380 residues: Chaperone protein DnaJ (380 aa).

The region spanning 5-72 (DFYEVLGVAK…NKRAAYDQYG (68 aa)) is the J domain. Residues 140–218 (GKDAQIRIPS…CGGQGKVKRQ (79 aa)) form a CR-type zinc finger. The Zn(2+) site is built by Cys153, Cys156, Cys170, Cys173, Cys192, Cys195, Cys206, and Cys209. CXXCXGXG motif repeat units follow at residues 153–160 (CDTCHGSG), 170–177 (CTTCNGMG), 192–199 (CPHCRGTG), and 206–213 (CTSCGGQG). Residues 359-380 (KGGAKHSPSGESWTDRLKSFFS) are disordered. Over residues 371–380 (WTDRLKSFFS) the composition is skewed to basic and acidic residues.

Belongs to the DnaJ family. Homodimer. The cofactor is Zn(2+).

The protein localises to the cytoplasm. Participates actively in the response to hyperosmotic and heat shock by preventing the aggregation of stress-denatured proteins and by disaggregating proteins, also in an autonomous, DnaK-independent fashion. Unfolded proteins bind initially to DnaJ; upon interaction with the DnaJ-bound protein, DnaK hydrolyzes its bound ATP, resulting in the formation of a stable complex. GrpE releases ADP from DnaK; ATP binding to DnaK triggers the release of the substrate protein, thus completing the reaction cycle. Several rounds of ATP-dependent interactions between DnaJ, DnaK and GrpE are required for fully efficient folding. Also involved, together with DnaK and GrpE, in the DNA replication of plasmids through activation of initiation proteins. This is Chaperone protein DnaJ from Delftia acidovorans (strain DSM 14801 / SPH-1).